Reading from the N-terminus, the 226-residue chain is tRNA (guanine-N(1)-)-methyltransferase (226 aa).

S-adenosyl-L-methionine-binding positions include glycine 112 and 132-137; that span reads IGDYVL.

This sequence belongs to the RNA methyltransferase TrmD family. Homodimer.

The protein localises to the cytoplasm. It catalyses the reaction guanosine(37) in tRNA + S-adenosyl-L-methionine = N(1)-methylguanosine(37) in tRNA + S-adenosyl-L-homocysteine + H(+). In terms of biological role, specifically methylates guanosine-37 in various tRNAs. In Christiangramia forsetii (strain DSM 17595 / CGMCC 1.15422 / KT0803) (Gramella forsetii), this protein is tRNA (guanine-N(1)-)-methyltransferase.